The primary structure comprises 131 residues: Outer membrane protein assembly factor BamE (131 aa).

The N-terminal stretch at 1-16 (MRNLLLVAAVALSTAG) is a signal peptide. A lipid anchor (N-palmitoyl cysteine) is attached at C17. C17 is lipidated: S-diacylglycerol cysteine. Residues 112 to 131 (SAPKQFGRNLARDKKKQRGR) form a disordered region.

Belongs to the BamE family. Part of the Bam complex.

The protein resides in the cell outer membrane. Functionally, part of the outer membrane protein assembly complex, which is involved in assembly and insertion of beta-barrel proteins into the outer membrane. The chain is Outer membrane protein assembly factor BamE from Xanthomonas campestris pv. campestris (strain ATCC 33913 / DSM 3586 / NCPPB 528 / LMG 568 / P 25).